The sequence spans 311 residues: tRNA dimethylallyltransferase (311 aa).

ATP is bound at residue 9-16 (GPTAVGKT). 11–16 (TAVGKT) is a binding site for substrate. The interaction with substrate tRNA stretch occupies residues 34–37 (DSMQ).

The protein belongs to the IPP transferase family. In terms of assembly, monomer. Mg(2+) serves as cofactor.

The catalysed reaction is adenosine(37) in tRNA + dimethylallyl diphosphate = N(6)-dimethylallyladenosine(37) in tRNA + diphosphate. Functionally, catalyzes the transfer of a dimethylallyl group onto the adenine at position 37 in tRNAs that read codons beginning with uridine, leading to the formation of N6-(dimethylallyl)adenosine (i(6)A). This is tRNA dimethylallyltransferase from Clostridium botulinum (strain Hall / ATCC 3502 / NCTC 13319 / Type A).